The sequence spans 1054 residues: Trehalose synthase complex regulatory subunit TPS3 (1054 aa).

A disordered region spans residues 112–133; sequence AANSGIPPANNPVSSGSTAQRP. A compositionally biased stretch (polar residues) spans 122–132; that stretch reads NPVSSGSTAQR. Phosphoserine occurs at positions 148, 150, and 181. Disordered regions lie at residues 155–203 and 223–250; these read ASSI…PVSK and QQQASLPSMKRVSGSTAGDSSIASSSSN. A compositionally biased stretch (polar residues) spans 170 to 182; it reads LSSSLMKNPNLSF. Over residues 235 to 249 the composition is skewed to low complexity; the sequence is SGSTAGDSSIASSSS. Phosphothreonine is present on Thr265. 2 positions are modified to phosphoserine: Ser267 and Ser273. The segment at 287–778 is glycosyltransferase; it reads KFGGYSNNAK…SNQETSTVFN (492 aa). Ser960 bears the Phosphoserine mark.

In the N-terminal section; belongs to the glycosyltransferase 20 family. As to quaternary structure, the trehalose synthase complex is composed of the two catalytic subunits TPS1 and TPS2 and at least one of the two regulatory subunits TPS3 or TSL1.

The protein resides in the cytoplasm. In terms of biological role, regulatory subunit of the trehalose synthase complex that catalyzes the production of trehalose from glucose-6-phosphate and UDP-glucose in a two step process. May stabilize the trehalose synthase complex. The protein is Trehalose synthase complex regulatory subunit TPS3 (TPS3) of Saccharomyces cerevisiae (strain ATCC 204508 / S288c) (Baker's yeast).